Here is a 514-residue protein sequence, read N- to C-terminus: 2,3-bisphosphoglycerate-independent phosphoglycerate mutase (514 aa).

The Mn(2+) site is built by aspartate 14 and serine 64. Serine 64 functions as the Phosphoserine intermediate in the catalytic mechanism. Substrate is bound by residues histidine 125, 155–156 (RD), arginine 187, arginine 193, 263–266 (RADR), and lysine 336. Mn(2+) contacts are provided by aspartate 403, histidine 407, aspartate 444, histidine 445, and histidine 463.

Belongs to the BPG-independent phosphoglycerate mutase family. Monomer. Mn(2+) is required as a cofactor.

It carries out the reaction (2R)-2-phosphoglycerate = (2R)-3-phosphoglycerate. It functions in the pathway carbohydrate degradation; glycolysis; pyruvate from D-glyceraldehyde 3-phosphate: step 3/5. In terms of biological role, catalyzes the interconversion of 2-phosphoglycerate and 3-phosphoglycerate. The protein is 2,3-bisphosphoglycerate-independent phosphoglycerate mutase of Salmonella choleraesuis (strain SC-B67).